The chain runs to 258 residues: Imidazole glycerol phosphate synthase subunit HisF (258 aa).

Residues aspartate 12 and aspartate 131 contribute to the active site.

This sequence belongs to the HisA/HisF family. Heterodimer of HisH and HisF.

The protein localises to the cytoplasm. It catalyses the reaction 5-[(5-phospho-1-deoxy-D-ribulos-1-ylimino)methylamino]-1-(5-phospho-beta-D-ribosyl)imidazole-4-carboxamide + L-glutamine = D-erythro-1-(imidazol-4-yl)glycerol 3-phosphate + 5-amino-1-(5-phospho-beta-D-ribosyl)imidazole-4-carboxamide + L-glutamate + H(+). The protein operates within amino-acid biosynthesis; L-histidine biosynthesis; L-histidine from 5-phospho-alpha-D-ribose 1-diphosphate: step 5/9. In terms of biological role, IGPS catalyzes the conversion of PRFAR and glutamine to IGP, AICAR and glutamate. The HisF subunit catalyzes the cyclization activity that produces IGP and AICAR from PRFAR using the ammonia provided by the HisH subunit. This is Imidazole glycerol phosphate synthase subunit HisF from Nitrosomonas eutropha (strain DSM 101675 / C91 / Nm57).